The chain runs to 286 residues: Protease HtpX (286 aa).

The next 2 helical transmembrane spans lie at 4-24 and 33-53; these read ILLF…ILSL and TGLL…SLFL. Residue H139 coordinates Zn(2+). E140 is an active-site residue. H143 is a Zn(2+) binding site. 2 consecutive transmembrane segments (helical) span residues 147-167 and 186-206; these read GDMV…IFVS and IYFL…SMIA. E214 serves as a coordination point for Zn(2+).

This sequence belongs to the peptidase M48B family. It depends on Zn(2+) as a cofactor.

It localises to the cell inner membrane. The sequence is that of Protease HtpX from Pasteurella multocida (strain Pm70).